Here is an 854-residue protein sequence, read N- to C-terminus: DNA mismatch repair protein MutS (854 aa).

608 to 615 contacts ATP; that stretch reads GPNMAGKS.

Belongs to the DNA mismatch repair MutS family.

In terms of biological role, this protein is involved in the repair of mismatches in DNA. It is possible that it carries out the mismatch recognition step. This protein has a weak ATPase activity. The polypeptide is DNA mismatch repair protein MutS (Leuconostoc mesenteroides subsp. mesenteroides (strain ATCC 8293 / DSM 20343 / BCRC 11652 / CCM 1803 / JCM 6124 / NCDO 523 / NBRC 100496 / NCIMB 8023 / NCTC 12954 / NRRL B-1118 / 37Y)).